Reading from the N-terminus, the 460-residue chain is Trigger factor (460 aa).

The PPIase FKBP-type domain occupies 166 to 245; that stretch reads DDFLTIDITA…VKAVKERELP (80 aa). The segment at 434–460 is disordered; sequence AAEEAAAGEANEEADVVASDDPAAVKF. Positions 449-460 are enriched in low complexity; sequence VVASDDPAAVKF.

It belongs to the FKBP-type PPIase family. Tig subfamily.

The protein localises to the cytoplasm. The catalysed reaction is [protein]-peptidylproline (omega=180) = [protein]-peptidylproline (omega=0). Involved in protein export. Acts as a chaperone by maintaining the newly synthesized protein in an open conformation. Functions as a peptidyl-prolyl cis-trans isomerase. The sequence is that of Trigger factor from Paenarthrobacter aurescens (strain TC1).